The following is a 1141-amino-acid chain: DNA-directed RNA polymerase subunit beta (1141 aa).

The interval 1117-1141 (GINISREEPPGQLDDTPDTFSRGGM) is disordered.

This sequence belongs to the RNA polymerase beta chain family. In terms of assembly, the RNAP catalytic core consists of 2 alpha, 1 beta, 1 beta' and 1 omega subunit. When a sigma factor is associated with the core the holoenzyme is formed, which can initiate transcription.

It catalyses the reaction RNA(n) + a ribonucleoside 5'-triphosphate = RNA(n+1) + diphosphate. Functionally, DNA-dependent RNA polymerase catalyzes the transcription of DNA into RNA using the four ribonucleoside triphosphates as substrates. This chain is DNA-directed RNA polymerase subunit beta, found in Rubrobacter xylanophilus (strain DSM 9941 / JCM 11954 / NBRC 16129 / PRD-1).